The chain runs to 410 residues: F-box protein At3g61340 (410 aa).

One can recognise an F-box domain in the interval 17–66 (EEKSERIPFDLVIEILLRLPVKSIARFRYVSKLWQSTLRGQHFTESYLTI).

This chain is F-box protein At3g61340, found in Arabidopsis thaliana (Mouse-ear cress).